The chain runs to 169 residues: Ribosome maturation factor RimM (169 aa).

The PRC barrel domain occupies 93-166 (GEHEFYYHEI…RIQITPLPGL (74 aa)).

This sequence belongs to the RimM family. Binds ribosomal protein uS19.

It localises to the cytoplasm. In terms of biological role, an accessory protein needed during the final step in the assembly of 30S ribosomal subunit, possibly for assembly of the head region. Essential for efficient processing of 16S rRNA. May be needed both before and after RbfA during the maturation of 16S rRNA. It has affinity for free ribosomal 30S subunits but not for 70S ribosomes. The sequence is that of Ribosome maturation factor RimM from Exiguobacterium sibiricum (strain DSM 17290 / CCUG 55495 / CIP 109462 / JCM 13490 / 255-15).